A 280-amino-acid chain; its full sequence is 1-cyclohexenylcarbonyl-CoA reductase (280 aa).

Residues 22-25 (SRGI), 71-72 (DV), and N98 contribute to the NADP(+) site. Residues Y158 and K165 each act as proton acceptor in the active site. Residues K165 and 194–196 (IDS) each bind NADP(+).

The protein belongs to the short-chain dehydrogenases/reductases (SDR) family. As to quaternary structure, homodimer.

It carries out the reaction (4R,5R)-4,5-dihydroxycyclohex-2-ene-1-carbonyl-CoA + NADP(+) = (3R,4R)-3,4-dihydroxycyclohexa-1,5-diene-1-carbonyl-CoA + NADPH + H(+). It catalyses the reaction (3S)-3-hydroxycyclohexane-1-carbonyl-CoA + NADP(+) = (5S)-5-hydroxycyclohex-1-ene-1-carbonyl-CoA + NADPH + H(+). The enzyme catalyses cyclohexane-1-carbonyl-CoA + NADP(+) = cyclohex-1-ene-1-carbonyl-CoA + NADPH + H(+). It functions in the pathway antibiotic biosynthesis. Inhibited by the thiol inhibitors p-chloromercuribenzoate, N-ethylmaleimide and iodoacetamide. Also inhibited by various divalent cations. Involved in the biosynthesis of the antifungal antibiotic ansatrienin A (mycotrienin I). Catalyzes three of the reductive steps involved in the formation of the cyclohexanecarboxylic acid (CHC) moiety of ansatrienin from shikimic acid. Can use 3,4-dihydroxycyclohexa-1,5-diene-1-carbonyl-CoA, 5-hydroxycyclohex-1-ene-1-carbonyl-CoA and cyclohex-1-ene-1-carbonyl-CoA as substrates. In Streptomyces collinus, this protein is 1-cyclohexenylcarbonyl-CoA reductase.